A 181-amino-acid polypeptide reads, in one-letter code: MTPELAHDLKASVRTIPDYPKPGIMFRDITTLMGDPRSFRRAVDELVQPWAGSKIDKVAGIEARGFIIGGAIAHQVSSGFVPIRKKGKLPHTCVSMEYTLEYGTDHIEIHVDAITPGERVILVDDLIATGGTAEGAIKLLRQIGAEVVAACFIIDLPDLGGAAKVRSMGVPVRTLVEFGGH.

It belongs to the purine/pyrimidine phosphoribosyltransferase family. Homodimer.

It is found in the cytoplasm. It catalyses the reaction AMP + diphosphate = 5-phospho-alpha-D-ribose 1-diphosphate + adenine. It participates in purine metabolism; AMP biosynthesis via salvage pathway; AMP from adenine: step 1/1. Catalyzes a salvage reaction resulting in the formation of AMP, that is energically less costly than de novo synthesis. The protein is Adenine phosphoribosyltransferase of Rhodopseudomonas palustris (strain HaA2).